The chain runs to 365 residues: tRNA/tmRNA (uracil-C(5))-methyltransferase (365 aa).

The S-adenosyl-L-methionine site is built by Q189, Y217, N222, E238, and D298. The active-site Nucleophile is C323. E357 serves as the catalytic Proton acceptor.

This sequence belongs to the class I-like SAM-binding methyltransferase superfamily. RNA M5U methyltransferase family. TrmA subfamily.

It carries out the reaction uridine(54) in tRNA + S-adenosyl-L-methionine = 5-methyluridine(54) in tRNA + S-adenosyl-L-homocysteine + H(+). The catalysed reaction is uridine(341) in tmRNA + S-adenosyl-L-methionine = 5-methyluridine(341) in tmRNA + S-adenosyl-L-homocysteine + H(+). Functionally, dual-specificity methyltransferase that catalyzes the formation of 5-methyluridine at position 54 (m5U54) in all tRNAs, and that of position 341 (m5U341) in tmRNA (transfer-mRNA). This is tRNA/tmRNA (uracil-C(5))-methyltransferase from Shewanella frigidimarina (strain NCIMB 400).